The chain runs to 183 residues: Apo-citrate lyase phosphoribosyl-dephospho-CoA transferase (183 aa).

It belongs to the CitX family.

The catalysed reaction is apo-[citrate lyase ACP] + 2'-(5''-triphospho-alpha-D-ribosyl)-3'-dephospho-CoA = holo-[citrate lyase ACP] + diphosphate. Transfers 2-(5''-triphosphoribosyl)-3'-dephosphocoenzyme-A on a serine residue to the apo-acyl carrier protein (gamma chain) of the citrate lyase to yield holo-acyl carrier protein. This is Apo-citrate lyase phosphoribosyl-dephospho-CoA transferase from Escherichia coli O9:H4 (strain HS).